The chain runs to 177 residues: Large ribosomal subunit protein uL6 (177 aa).

Belongs to the universal ribosomal protein uL6 family. Part of the 50S ribosomal subunit.

Functionally, this protein binds to the 23S rRNA, and is important in its secondary structure. It is located near the subunit interface in the base of the L7/L12 stalk, and near the tRNA binding site of the peptidyltransferase center. The chain is Large ribosomal subunit protein uL6 from Acinetobacter baumannii (strain SDF).